We begin with the raw amino-acid sequence, 208 residues long: Orotidine 5'-phosphate decarboxylase (208 aa).

Substrate is bound by residues D7, K29, 57 to 66 (DLKLADIPNT), S109, 162 to 172 (PGIGAQGGKAK), G185, and R186. K59 acts as the Proton donor in catalysis.

This sequence belongs to the OMP decarboxylase family. Type 1 subfamily. Homodimer.

The enzyme catalyses orotidine 5'-phosphate + H(+) = UMP + CO2. It participates in pyrimidine metabolism; UMP biosynthesis via de novo pathway; UMP from orotate: step 2/2. Its function is as follows. Catalyzes the decarboxylation of orotidine 5'-monophosphate (OMP) to uridine 5'-monophosphate (UMP). The sequence is that of Orotidine 5'-phosphate decarboxylase from Pyrococcus abyssi (strain GE5 / Orsay).